A 284-amino-acid polypeptide reads, in one-letter code: L-ribulose-5-phosphate 3-epimerase UlaE (284 aa).

This sequence belongs to the L-ribulose-5-phosphate 3-epimerase family.

The catalysed reaction is L-ribulose 5-phosphate = L-xylulose 5-phosphate. Its pathway is cofactor degradation; L-ascorbate degradation; D-xylulose 5-phosphate from L-ascorbate: step 3/4. Its function is as follows. Catalyzes the isomerization of L-xylulose-5-phosphate to L-ribulose-5-phosphate. Is involved in the anaerobic L-ascorbate utilization. The polypeptide is L-ribulose-5-phosphate 3-epimerase UlaE (Escherichia coli O127:H6 (strain E2348/69 / EPEC)).